We begin with the raw amino-acid sequence, 225 residues long: Techylectin-like protein (225 aa).

The Fibrinogen C-terminal domain maps to 32–225; sequence CPSPPLPIDC…WTEIKIKDVK (194 aa). Cys-41 and Cys-60 form a disulfide bridge. A Cell attachment site motif is present at residues 75–77; sequence RGD. Asp-164 and Thr-170 together coordinate Ca(2+). Cysteines 172 and 185 form a disulfide.

In terms of tissue distribution, expressed by the venom gland.

It is found in the secreted. Lectin involved in innate immunity. This is Techylectin-like protein from Phoneutria nigriventer (Brazilian armed spider).